The sequence spans 983 residues: MDTEPNPGTSSVSTTTSSTTTTTITTSSSRMQQPQISVYSGSDRHAVQVIQQALHRPPSSAAQYLQQMYAAQQQHLMLHTAALQQQHLSSSQLQSLAAVQASLSSGRPSTSPTGSVTQQSSMSQTSINLSTSPTPAQLISRSQASSSTSGSITQQTMLLGSTSPTLTASQAQMYLRAQMLIFTPATTVAAVQSDIPVVSSSSSSSCQSAATQVQNLTLRSQKLGVLSSSQNGPPKSTSQTQSLTICHNKTTVTSSKISQRDPSPESNKKGESPSLESRSTAVTRTSSIHQLIAPASYSPIQPHSLIKHQQIPLHSPPSKVSHHQLILQQQQQQIQPITLQNSTQDPPPSQHCIPLQNHGLPPAPSNAQSQHCSPIQSHPSPLTVSPNQSQSAQQSVVVSPPPPHSPSQSPTIIIHPQALIQPHPLVSSALQPGPNLQQSTANQVQATAQLNLPSHLPLPASPVVHIGPVQQSALVSPGQQIVSPSHQQYSSLQSSPIPIASPPQMSTSPPAQIPPLPLQSMQSLQVQPEILSQGQVLVQNALVSEEELPAAEALVQLPFQTLPPPQTVAVNLQVQPPAPVDPPVVYQVEDVCEEEMPEESDECVRMDRTPPPPTLSPAAITVGRGEDLTSEHPLLEQVELPAVASVSASVIKSPSDPSHVSVPPPPLLLPAATTRSNSTSMHSSIPSIENKPPQAIVKPQILTHVIEGFVIQEGLEPFPVSRSSLLIEQPVKKRPLLDNQVINSVCVQPELQNNTKHADNSSDTEMEDMIAEETLEEMDSELLKCEFCGKMGYANEFLRSKRFCTMSCAKRYNVSCSKKFALSRWNRKPDNQSLGHRGRRPSGPDGAAREHILRQLPITYPSAEEDLASHEDSVPSAMTTRLRRQSERERERELRDVRIRKMPENSDLLPVAQTEPSIWTVDDVWAFIHSLPGCQDIADEFRAQEIDGQALLLLKEDHLMSAMNIKLGPALKICARINSLKES.

7 disordered regions span residues 1-34, 103-149, 225-283, 313-332, 339-410, 477-509, and 601-620; these read MDTE…MQQP, LSSG…SSTS, VLSS…TAVT, LHSP…QQQQ, LQNS…SQSP, PGQQ…STSP, and DECV…PAAI. Composition is skewed to low complexity over residues 9–29 and 103–126; these read TSSV…TSSS and LSSG…SQTS. Positions 127–139 are enriched in polar residues; that stretch reads INLSTSPTPAQLI. Residues 140–149 show a composition bias toward low complexity; it reads SRSQASSSTS. Residues 225–257 are compositionally biased toward polar residues; sequence VLSSSQNGPPKSTSQTQSLTICHNKTTVTSSKI. Basic and acidic residues predominate over residues 258–271; it reads SQRDPSPESNKKGE. Residues serine 263 and serine 272 each carry the phosphoserine modification. The span at 274–283 shows a compositional bias: polar residues; it reads SLESRSTAVT. Serine 315 is modified (phosphoserine). Over residues 365–383 the composition is skewed to polar residues; it reads SNAQSQHCSPIQSHPSPLT. Low complexity predominate over residues 384–398; that stretch reads VSPNQSQSAQQSVVV. A compositionally biased stretch (polar residues) spans 477–489; it reads PGQQIVSPSHQQY. Residues 490 to 506 show a composition bias toward low complexity; the sequence is SSLQSSPIPIASPPQMS. Threonine 609 and threonine 614 each carry phosphothreonine. Position 616 is a phosphoserine (serine 616). Residues lysine 691 and lysine 732 each participate in a glycyl lysine isopeptide (Lys-Gly) (interchain with G-Cter in SUMO2) cross-link. The HD1 motif lies at 691 to 720; the sequence is KPPQAIVKPQILTHVIEGFVIQEGLEPFPV. A phosphoserine mark is found at serine 761 and serine 762. The FCS-type zinc-finger motif lies at 776 to 810; that stretch reads EEMDSELLKCEFCGKMGYANEFLRSKRFCTMSCAK. Positions 785, 788, 804, and 808 each coordinate Zn(2+). Lysine 810 is covalently cross-linked (Glycyl lysine isopeptide (Lys-Gly) (interchain with G-Cter in SUMO2)). 2 disordered regions span residues 827-847 and 864-889; these read RKPD…PDGA and EEDL…SERE. Residues 919–983 form the SAM domain; it reads WTVDDVWAFI…CARINSLKES (65 aa).

As to quaternary structure, component of a PRC1-like complex.

It is found in the nucleus. Component of a Polycomb group (PcG) multiprotein PRC1-like complex, a complex class required to maintain the transcriptionally repressive state of many genes, including Hox genes, throughout development. PcG PRC1 complex acts via chromatin remodeling and modification of histones; it mediates monoubiquitination of histone H2A 'Lys-119', rendering chromatin heritably changed in its expressibility. The chain is Polyhomeotic-like protein 3 (PHC3) from Homo sapiens (Human).